Consider the following 874-residue polypeptide: Protein translocase subunit SecA (874 aa).

ATP-binding positions include Q87, G105–T109, and D512. Zn(2+) contacts are provided by C859, C861, C870, and H871.

The protein belongs to the SecA family. As to quaternary structure, monomer and homodimer. Part of the essential Sec protein translocation apparatus which comprises SecA, SecYEG and auxiliary proteins SecDF-YajC and YidC. The cofactor is Zn(2+).

The protein localises to the cell inner membrane. It is found in the cytoplasm. It carries out the reaction ATP + H2O + cellular proteinSide 1 = ADP + phosphate + cellular proteinSide 2.. Its function is as follows. Part of the Sec protein translocase complex. Interacts with the SecYEG preprotein conducting channel. Has a central role in coupling the hydrolysis of ATP to the transfer of proteins into and across the cell membrane, serving both as a receptor for the preprotein-SecB complex and as an ATP-driven molecular motor driving the stepwise translocation of polypeptide chains across the membrane. In Buchnera aphidicola subsp. Schizaphis graminum (strain Sg), this protein is Protein translocase subunit SecA.